A 362-amino-acid chain; its full sequence is Acetylajmalan esterase 2 (362 aa).

Residues 1-23 (MGFAARPFHIVFSLFVLAGATQA) form the signal peptide. Ser38 serves as the catalytic Nucleophile. Asn100, Asn118, Asn151, and Asn202 each carry an N-linked (GlcNAc...) asparagine glycan. Residues Asp335 and His338 contribute to the active site.

The protein belongs to the 'GDSL' lipolytic enzyme family. In terms of tissue distribution, confined to roots.

The catalysed reaction is 17-O-acetylnorajmaline + H2O = norajmaline + acetate + H(+). It carries out the reaction 17-O-acetylajmaline + H2O = ajmaline + acetate + H(+). The protein operates within alkaloid biosynthesis; ajmaline biosynthesis. Acetylesterase involved in the biosynthesis of ajmaline-type monoterpenoid indole alkaloids (MIAs) natural products, important plant-derived pharmaceuticals used in the therapy of heart disorders. Deacetylates 17-O-acetylnorajmaline to produce norajmaline. May also catalyze the conversion of 17-O-acetylajmaline to ajmaline. This Rauvolfia serpentina (Serpentine wood) protein is Acetylajmalan esterase 2.